A 298-amino-acid polypeptide reads, in one-letter code: Glutamyl-Q tRNA(Asp) synthetase (298 aa).

L-glutamate-binding positions include Arg8–Ser12 and Glu44. A 'HIGH' region motif is present at residues Pro11–Ser21. Residues Cys100, Cys102, Tyr123, and Cys127 each coordinate Zn(2+). Tyr183 and Arg201 together coordinate L-glutamate. The 'KMSKS' region signature appears at Lys239–Gln243. Position 242 (Lys242) interacts with ATP.

Belongs to the class-I aminoacyl-tRNA synthetase family. GluQ subfamily. Requires Zn(2+) as cofactor.

Catalyzes the tRNA-independent activation of glutamate in presence of ATP and the subsequent transfer of glutamate onto a tRNA(Asp). Glutamate is transferred on the 2-amino-5-(4,5-dihydroxy-2-cyclopenten-1-yl) moiety of the queuosine in the wobble position of the QUC anticodon. In Burkholderia cenocepacia (strain ATCC BAA-245 / DSM 16553 / LMG 16656 / NCTC 13227 / J2315 / CF5610) (Burkholderia cepacia (strain J2315)), this protein is Glutamyl-Q tRNA(Asp) synthetase.